The following is a 76-amino-acid chain: Small ribosomal subunit protein bS18 (76 aa).

It belongs to the bacterial ribosomal protein bS18 family. As to quaternary structure, part of the 30S ribosomal subunit. Forms a tight heterodimer with protein bS6.

Its function is as follows. Binds as a heterodimer with protein bS6 to the central domain of the 16S rRNA, where it helps stabilize the platform of the 30S subunit. The sequence is that of Small ribosomal subunit protein bS18 from Desulfitobacterium hafniense (strain Y51).